Here is a 346-residue protein sequence, read N- to C-terminus: Tyrosine--tRNA ligase (346 aa).

An L-tyrosine-binding site is contributed by tyrosine 35. A 'HIGH' region motif is present at residues 40–48; sequence PTGEMHIGH. Residues tyrosine 162, glutamine 166, aspartate 169, and glutamine 184 each coordinate L-tyrosine.

Belongs to the class-I aminoacyl-tRNA synthetase family. TyrS type 3 subfamily. In terms of assembly, homodimer.

The protein localises to the cytoplasm. The catalysed reaction is tRNA(Tyr) + L-tyrosine + ATP = L-tyrosyl-tRNA(Tyr) + AMP + diphosphate + H(+). Its function is as follows. Catalyzes the attachment of tyrosine to tRNA(Tyr) in a two-step reaction: tyrosine is first activated by ATP to form Tyr-AMP and then transferred to the acceptor end of tRNA(Tyr). The sequence is that of Tyrosine--tRNA ligase from Haloarcula marismortui (strain ATCC 43049 / DSM 3752 / JCM 8966 / VKM B-1809) (Halobacterium marismortui).